A 600-amino-acid polypeptide reads, in one-letter code: Nisin transport ATP-binding protein NisT (600 aa).

A run of 5 helical transmembrane segments spans residues 34–54 (AIYL…SLFI), 69–89 (LINI…LGQL), 147–167 (AIIV…FIGT), 168–188 (WNIG…VLFL), and 260–280 (IFLD…MILS). The ABC transmembrane type-1 domain occupies 34–317 (AIYLIVLNAI…MIQNIYIIYN (284 aa)). The region spanning 352–592 (VKVINLSYVY…CQYYQELYYS (241 aa)) is the ABC transporter domain. 386 to 393 (GKNGSGKS) provides a ligand contact to ATP.

This sequence belongs to the ABC transporter superfamily. Nisin exporter (TC 3.A.1.111.3) family.

The protein resides in the cell membrane. Probably implicated in the export process of the lantibiotic nisin. The protein is Nisin transport ATP-binding protein NisT (nisT) of Lactococcus lactis subsp. lactis (Streptococcus lactis).